The following is a 308-amino-acid chain: Insoluble matrix shell protein 4 (308 aa).

Disordered regions lie at residues H1–Y21, N47–V104, and Y134–S250. A compositionally biased stretch (low complexity) spans N47–S99.

Component of the acid-insoluble organic matrix of the calcified shell.

The protein resides in the secreted. This is Insoluble matrix shell protein 4 from Ruditapes philippinarum (Japanese carpet shell).